A 133-amino-acid polypeptide reads, in one-letter code: Phosphoribosyl-AMP cyclohydrolase (133 aa).

Asp-77 provides a ligand contact to Mg(2+). Cys-78 serves as a coordination point for Zn(2+). Positions 79 and 81 each coordinate Mg(2+). Zn(2+)-binding residues include Cys-95 and Cys-102.

The protein belongs to the PRA-CH family. Homodimer. Requires Mg(2+) as cofactor. Zn(2+) is required as a cofactor.

Its subcellular location is the cytoplasm. It catalyses the reaction 1-(5-phospho-beta-D-ribosyl)-5'-AMP + H2O = 1-(5-phospho-beta-D-ribosyl)-5-[(5-phospho-beta-D-ribosylamino)methylideneamino]imidazole-4-carboxamide. It participates in amino-acid biosynthesis; L-histidine biosynthesis; L-histidine from 5-phospho-alpha-D-ribose 1-diphosphate: step 3/9. Its function is as follows. Catalyzes the hydrolysis of the adenine ring of phosphoribosyl-AMP. In Pseudomonas fluorescens (strain Pf0-1), this protein is Phosphoribosyl-AMP cyclohydrolase.